Reading from the N-terminus, the 347-residue chain is RNA 3'-terminal phosphate cyclase (347 aa).

Residues glutamine 101 and 286–289 each bind ATP; that span reads HMAD. The Tele-AMP-histidine intermediate role is filled by histidine 312.

This sequence belongs to the RNA 3'-terminal cyclase family. Type 1 subfamily.

Its subcellular location is the cytoplasm. The catalysed reaction is a 3'-end 3'-phospho-ribonucleotide-RNA + ATP = a 3'-end 2',3'-cyclophospho-ribonucleotide-RNA + AMP + diphosphate. Functionally, catalyzes the conversion of 3'-phosphate to a 2',3'-cyclic phosphodiester at the end of RNA. The mechanism of action of the enzyme occurs in 3 steps: (A) adenylation of the enzyme by ATP; (B) transfer of adenylate to an RNA-N3'P to produce RNA-N3'PP5'A; (C) and attack of the adjacent 2'-hydroxyl on the 3'-phosphorus in the diester linkage to produce the cyclic end product. The biological role of this enzyme is unknown but it is likely to function in some aspects of cellular RNA processing. In Pyrobaculum neutrophilum (strain DSM 2338 / JCM 9278 / NBRC 100436 / V24Sta) (Thermoproteus neutrophilus), this protein is RNA 3'-terminal phosphate cyclase.